A 285-amino-acid chain; its full sequence is MNNIIDGKALANEILADLKLEIQGFKEKTQTSPKLAIVLVGDNPASMIYIKNKIKNAQQVGIDTLLVNLSTNIYTDDLISKINELNLDKEISGIIVQLPLPSSIDENKILSAVLPSKDSDGFHPLNVGYLHSGINQGFIPCTALGCLAVIKKYAPNLNGKDAVIVGRSNIVGKPLSALLLKENCSVTICHSKTCNLSSITSKADIVVVAIGSPLKLTAEYFNPESIVIDVGINRISNNKIIGDVDFENVKSKVKYITPVPGGIGPMTIAFLLKNTVKAFKNAIAL.

NADP(+) is bound by residues Gly-166–Ser-168, Ser-191, and Ile-232.

The protein belongs to the tetrahydrofolate dehydrogenase/cyclohydrolase family. Homodimer.

It carries out the reaction (6R)-5,10-methylene-5,6,7,8-tetrahydrofolate + NADP(+) = (6R)-5,10-methenyltetrahydrofolate + NADPH. The catalysed reaction is (6R)-5,10-methenyltetrahydrofolate + H2O = (6R)-10-formyltetrahydrofolate + H(+). It functions in the pathway one-carbon metabolism; tetrahydrofolate interconversion. Functionally, catalyzes the oxidation of 5,10-methylenetetrahydrofolate to 5,10-methenyltetrahydrofolate and then the hydrolysis of 5,10-methenyltetrahydrofolate to 10-formyltetrahydrofolate. This chain is Bifunctional protein FolD, found in Rickettsia typhi (strain ATCC VR-144 / Wilmington).